Reading from the N-terminus, the 67-residue chain is Large ribosomal subunit protein bL35 (67 aa).

Positions 1–16 (MPKMKTKSSAKKRFRV) are enriched in basic residues. Positions 1–23 (MPKMKTKSSAKKRFRVRPGGTVK) are disordered.

This sequence belongs to the bacterial ribosomal protein bL35 family.

This is Large ribosomal subunit protein bL35 from Variovorax paradoxus (strain S110).